A 400-amino-acid chain; its full sequence is Lysophospholipid transporter LplT (400 aa).

12 helical membrane-spanning segments follow: residues 19-39 (VIVA…ATLA), 53-73 (VLQM…GQIA), 91-111 (AGAA…LVGI), 139-159 (LMEA…GVLA), 164-184 (IAAL…NLFI), 195-213 (SWRL…VVLW), 227-247 (LFWG…PVAL), 257-277 (YLNA…AKLV), 281-301 (TVSR…IFSL), 304-324 (ALLP…FFVV), 352-372 (NSAM…GVPA), and 373-393 (VAIG…LWIW).

Belongs to the major facilitator superfamily. LplT (TC 2.A.1.42) family.

It localises to the cell inner membrane. Catalyzes the facilitated diffusion of 2-acyl-glycero-3-phosphoethanolamine (2-acyl-GPE) into the cell. This is Lysophospholipid transporter LplT from Salmonella schwarzengrund (strain CVM19633).